The primary structure comprises 316 residues: Beta-ketoacyl-[acyl-carrier-protein] synthase III (316 aa).

Active-site residues include C112 and H243. The segment at 244–248 is ACP-binding; the sequence is QANLR. The active site involves N273.

Belongs to the thiolase-like superfamily. FabH family. In terms of assembly, homodimer.

The protein localises to the cytoplasm. It carries out the reaction malonyl-[ACP] + acetyl-CoA + H(+) = 3-oxobutanoyl-[ACP] + CO2 + CoA. Its pathway is lipid metabolism; fatty acid biosynthesis. Functionally, catalyzes the condensation reaction of fatty acid synthesis by the addition to an acyl acceptor of two carbons from malonyl-ACP. Catalyzes the first condensation reaction which initiates fatty acid synthesis and may therefore play a role in governing the total rate of fatty acid production. Possesses both acetoacetyl-ACP synthase and acetyl transacylase activities. Its substrate specificity determines the biosynthesis of branched-chain and/or straight-chain of fatty acids. The chain is Beta-ketoacyl-[acyl-carrier-protein] synthase III from Haemophilus influenzae (strain 86-028NP).